Here is a 497-residue protein sequence, read N- to C-terminus: MAKELKDLTKRSENYSQWYNDLVVKADLAEQSAVRGCMVIKPYGYAIWEKMQRQLDDMFKETGHVNAYFPLLIPKSFLSREAEHVEGFAKECAVVTHYRLKNAEDGSGVVVDPAAKLEEELIIRPTSETIIWNTYKNWIQSYRDLPILCNQWANVFRWEMRTRLFLRTAEFLWQEGHTAHATREEAEEEAIRMLNVYAEFAEKYMAVPVVKGVKSANERFAGALDTYTIEAMMQDGKALQSGTSHFLGQNFAKAFDVQFVNKENKLEYVWATSWGVSTRLMGALIMTHSDDNGLVLPPHLAPIQVVIVPIYKNDEQLKLIDAKVEGIVARLKQLGISVKYDNADNKRPGFKFADYELKGVPVRLVMGGRDLENNTMEVMRRDTLEKETVTCDGIETYVQNLLEEIQANIYKKARTYRDSRITTVDSYDEFKEKIEEGGFILAHWDGTVETEEKIKEETKATIRCIPFESFVEGDKEPGKCMVTGKPSACRVIFARSY.

This sequence belongs to the class-II aminoacyl-tRNA synthetase family. ProS type 3 subfamily. In terms of assembly, homodimer.

The protein localises to the cytoplasm. It catalyses the reaction tRNA(Pro) + L-proline + ATP = L-prolyl-tRNA(Pro) + AMP + diphosphate. Functionally, catalyzes the attachment of proline to tRNA(Pro) in a two-step reaction: proline is first activated by ATP to form Pro-AMP and then transferred to the acceptor end of tRNA(Pro). The polypeptide is Proline--tRNA ligase (Bacteroides fragilis (strain ATCC 25285 / DSM 2151 / CCUG 4856 / JCM 11019 / LMG 10263 / NCTC 9343 / Onslow / VPI 2553 / EN-2)).